Here is a 650-residue protein sequence, read N- to C-terminus: Macrolide export ATP-binding/permease protein MacB (650 aa).

The region spanning Leu5–Thr243 is the ABC transporter domain. Gly41–Ser48 lines the ATP pocket. Helical transmembrane passes span Leu273 to Gly293, Leu523 to Ile543, Ala554 to Phe574, Val580 to Leu600, and Pro613 to Leu633.

It belongs to the ABC transporter superfamily. Macrolide exporter (TC 3.A.1.122) family. In terms of assembly, homodimer. Part of the tripartite efflux system MacAB-TolC, which is composed of an inner membrane transporter, MacB, a periplasmic membrane fusion protein, MacA, and an outer membrane component, TolC. The complex forms a large protein conduit and can translocate molecules across both the inner and outer membranes. Interacts with MacA.

It is found in the cell inner membrane. Functionally, part of the tripartite efflux system MacAB-TolC. MacB is a non-canonical ABC transporter that contains transmembrane domains (TMD), which form a pore in the inner membrane, and an ATP-binding domain (NBD), which is responsible for energy generation. Confers resistance against macrolides. This chain is Macrolide export ATP-binding/permease protein MacB, found in Shigella dysenteriae serotype 1 (strain Sd197).